The sequence spans 121 residues: MMLIFVKITSFLERYIMVRKFKSELVRISSESLPPQLRIEVEKQIITDVAHCMELVRKIENANISIYDKSLYTGKSVQNQFTTYNANNDDYESPYKTPKIKSNPSLDSSGSSHYSFIKAIK.

The segment at Asn-85–Ser-111 is disordered. The span at Ile-100–Ser-111 shows a compositional bias: polar residues.

This is an uncharacterized protein from Dictyostelium discoideum (Social amoeba).